Reading from the N-terminus, the 364-residue chain is Anhydro-N-acetylmuramic acid kinase (364 aa).

11 to 18 contacts ATP; the sequence is GSSLDGID.

This sequence belongs to the anhydro-N-acetylmuramic acid kinase family.

The enzyme catalyses 1,6-anhydro-N-acetyl-beta-muramate + ATP + H2O = N-acetyl-D-muramate 6-phosphate + ADP + H(+). Its pathway is amino-sugar metabolism; 1,6-anhydro-N-acetylmuramate degradation. It functions in the pathway cell wall biogenesis; peptidoglycan recycling. In terms of biological role, catalyzes the specific phosphorylation of 1,6-anhydro-N-acetylmuramic acid (anhMurNAc) with the simultaneous cleavage of the 1,6-anhydro ring, generating MurNAc-6-P. Is required for the utilization of anhMurNAc either imported from the medium or derived from its own cell wall murein, and thus plays a role in cell wall recycling. The sequence is that of Anhydro-N-acetylmuramic acid kinase from Pseudomonas syringae pv. tomato (strain ATCC BAA-871 / DC3000).